An 84-amino-acid chain; its full sequence is uncharacterized protein (84 aa).

This is an uncharacterized protein from Lepidoptera (butterflies and moths).